Reading from the N-terminus, the 916-residue chain is Isoleucine--tRNA ligase (916 aa).

The short motif at 57–67 (PYANGNLHMGH) is the 'HIGH' region element. Glu554 contributes to the L-isoleucyl-5'-AMP binding site. A 'KMSKS' region motif is present at residues 595-599 (KMSKS). Lys598 contributes to the ATP binding site. Positions 885, 888, 905, and 908 each coordinate Zn(2+).

It belongs to the class-I aminoacyl-tRNA synthetase family. IleS type 1 subfamily. Monomer. Zn(2+) is required as a cofactor.

The protein resides in the cytoplasm. It carries out the reaction tRNA(Ile) + L-isoleucine + ATP = L-isoleucyl-tRNA(Ile) + AMP + diphosphate. In terms of biological role, catalyzes the attachment of isoleucine to tRNA(Ile). As IleRS can inadvertently accommodate and process structurally similar amino acids such as valine, to avoid such errors it has two additional distinct tRNA(Ile)-dependent editing activities. One activity is designated as 'pretransfer' editing and involves the hydrolysis of activated Val-AMP. The other activity is designated 'posttransfer' editing and involves deacylation of mischarged Val-tRNA(Ile). The sequence is that of Isoleucine--tRNA ligase from Staphylococcus epidermidis (strain ATCC 12228 / FDA PCI 1200).